The sequence spans 314 residues: Ribosomal RNA small subunit methyltransferase H (314 aa).

S-adenosyl-L-methionine contacts are provided by residues 36–38, Asp56, Phe80, Asp102, and Gln109; that span reads GGH. Residues 278 to 300 are disordered; the sequence is GGRSLKSIGKMKPSEEEVADNPR. Over residues 289 to 300 the composition is skewed to basic and acidic residues; the sequence is KPSEEEVADNPR.

The protein belongs to the methyltransferase superfamily. RsmH family.

The protein localises to the cytoplasm. The catalysed reaction is cytidine(1402) in 16S rRNA + S-adenosyl-L-methionine = N(4)-methylcytidine(1402) in 16S rRNA + S-adenosyl-L-homocysteine + H(+). Specifically methylates the N4 position of cytidine in position 1402 (C1402) of 16S rRNA. The chain is Ribosomal RNA small subunit methyltransferase H from Photorhabdus laumondii subsp. laumondii (strain DSM 15139 / CIP 105565 / TT01) (Photorhabdus luminescens subsp. laumondii).